We begin with the raw amino-acid sequence, 738 residues long: Adhesion G protein-coupled receptor L4 (738 aa).

The first 19 residues, 1–19, serve as a signal peptide directing secretion; sequence MRLLLLLVGLSTLLNHSYT. Residues 20-56 form the EGF-like 1 domain; that stretch reads QNCKTPCLPNAKCEVLDEVAACFCSTGYTGNGITICE. Topologically, residues 20 to 480 are extracellular; sequence QNCKTPCLPN…DYNILTRITQ (461 aa). 9 disulfide bridges follow: cysteine 22/cysteine 32, cysteine 26/cysteine 41, cysteine 43/cysteine 55, cysteine 61/cysteine 73, cysteine 67/cysteine 82, cysteine 84/cysteine 105, cysteine 111/cysteine 123, cysteine 117/cysteine 132, and cysteine 134/cysteine 155. Residues 57-106 enclose the EGF-like 2; calcium-binding domain; sequence DVDECNETSVCGDHAVCENTNGGFSCFCVEGYQTSTGKTQFTPNDGSYCQ. Asparagine 62 is a glycosylation site (N-linked (GlcNAc...) asparagine). Residues 107–156 form the EGF-like 3; calcium-binding domain; the sequence is DVDECNETSVCGDHAVCENTNGGFSCFCVEGYQTSTGKTQFTPNDGSYCQ. Residue asparagine 112 is glycosylated (N-linked (GlcNAc...) asparagine). Asparagine 175, asparagine 226, asparagine 297, asparagine 421, asparagine 429, and asparagine 443 each carry an N-linked (GlcNAc...) asparagine glycan. A GAIN-B domain is found at 292–467; it reads TQFDMNSTDL…AILMSPSTSI (176 aa). Disulfide bonds link cysteine 417–cysteine 449 and cysteine 437–cysteine 451. A GPS region spans residues 417-467; the sequence is CAFWNYSVDDMNNGSWSSEGCELTYSNDTHTSCRCSHLTHFAILMSPSTSI. The chain crosses the membrane as a helical span at residues 481-501; that stretch reads LGIIISLICLAICIFTFWFFS. The Cytoplasmic portion of the chain corresponds to 502 to 522; it reads EIQSTRTTIHKNLCCSLFLAQ. Residues 523–543 traverse the membrane as a helical segment; sequence LVFLVGININTNKLVCSIIAG. The Extracellular portion of the chain corresponds to 544–547; the sequence is LLHY. Residues 548 to 568 form a helical membrane-spanning segment; that stretch reads FFLAAFAWMCIEGIYLYLIVV. Residues 569 to 580 lie on the Cytoplasmic side of the membrane; that stretch reads GLIYNKGFLHKN. A helical transmembrane segment spans residues 581–601; the sequence is FYIFGYLSPAVVVGFSASLGY. Topologically, residues 602–621 are extracellular; sequence RYYGTTKVCWLSTENNFIWS. Residues 622 to 642 traverse the membrane as a helical segment; the sequence is FIGPACLIILVNLLAFGVIIY. Topologically, residues 643–666 are cytoplasmic; the sequence is KVFRHTAGLKPEVSCYENIRSCAR. Residues 667-687 traverse the membrane as a helical segment; it reads GALALLFLLGTTWTFGVLHVV. Over 688 to 694 the chain is Extracellular; it reads HASVVTA. A helical membrane pass occupies residues 695–715; the sequence is YLFTVSNAFQGMFIFLFLCVL. Over 716–738 the chain is Cytoplasmic; the sequence is SRKIQEEYYRLFKNVPCCFECLR.

This sequence belongs to the G-protein coupled receptor 2 family. Adhesion G-protein coupled receptor (ADGR) subfamily. As to quaternary structure, heterodimer of 2 chains generated by proteolytic processing; the large extracellular N-terminal fragment and the membrane-bound C-terminal fragment predominantly remain associated and non-covalently linked. Proteolytically cleaved into 2 subunits, an extracellular alpha subunit and a seven-transmembrane subunit. Post-translationally, glycosylated. In terms of tissue distribution, abundantly expressed in heart, lung, and kidney. Less evident expression is observed in brain, skeletal muscle, liver and spleen. No expression is detected in testis.

Its subcellular location is the cell membrane. Endothelial orphan receptor that acts as a key regulator of angiogenesis. This Rattus norvegicus (Rat) protein is Adhesion G protein-coupled receptor L4 (Adgrl4).